The sequence spans 885 residues: MQEAIILLALLGAMSGGEALHLILLPATGNVAENSPPGTSVHKFSVKLSASLSPVIPGFPQIVNSNPLTEAFRVNWLSGTYFEVVTTGMEQLDFETGPNIFDLQIYVKDEVGVTDLQVLTVQVTDVNEPPQFQGNLAEGLHLYIVERANPGFIYQVEAFDPEDTSRNIPLSYFLISPPKSFRMSANGTLFSTTELDFEAGHRSFHLIVEVRDSGGLKASTELQVNIVNLNDEVPRFTSPTRVYTVLEELSPGTIVANITAEDPDDEGFPSHLLYSITTVSKYFMINQLTGTIQVAQRIDRDAGELRQNPTISLEVLVKDRPYGGQENRIQITFIVEDVNDNPATCQKFTFSIMVPERTAKGTLLLDLNKFCFDDDSEAPNNRFNFTMPSGVGSGSRFLQDPAGSGKIVLIGDLDYENPSNLAAGNKYTVIIQVQDVAPPYYKNNVYVYILTSPENEFPLIFDRPSYVFDVSERRPARTRVGQVRATDKDLPQSSLLYSISTGGASLQYPNVFWINPKTGELQLVTKVDCETTPIYILRIQATNNEDTSSVTVTVNILEENDEKPICTPNSYFLALPVDLKVGTNIQNFKLTCTDLDSSPRSFRYSIGPGNVNNHFTFSPNAGSNVTRLLLTSRFDYAGGFDKIWDYKLLVYVTDDNLMSDRKKAEALVETGTVTLSIKVIPHPTTIITTTPRPRVTYQVLRKNVYSPSAWYVPFVITLGSILLLGLLVYLVVLLAKAIHRHCPCKTGKNKEPLTKKGETKTAERDVVVETIQMNTIFDGEAIDPVTGETYEFNSKTGARKWKDPLTQMPKWKESSHQGAAPRRVTAGEGMGSLRSANWEEDELSGKAWAEDAGLGSRNEGGKLGNPKNRNPAFMNRAYPKPHPGK.

A signal peptide spans 1 to 19; the sequence is MQEAIILLALLGAMSGGEA. At 20–713 the chain is on the extracellular side; that stretch reads LHLILLPATG…VYSPSAWYVP (694 aa). 6 consecutive Cadherin domains span residues 23–132, 136–236, 237–344, 346–466, 462–566, and 567–695; these read ILLP…PPQF, LAEG…VPRF, TSPT…NPAT, QKFT…RPSY, DRPS…KPIC, and TPNS…RPRV. Asn186 and Asn257 each carry an N-linked (GlcNAc...) asparagine glycan. Asn624 carries an N-linked (GlcNAc...) asparagine glycan. The chain crosses the membrane as a helical span at residues 714-734; the sequence is FVITLGSILLLGLLVYLVVLL. Residues 735-885 are Cytoplasmic-facing; that stretch reads AKAIHRHCPC…RAYPKPHPGK (151 aa). The tract at residues 808-885 is disordered; that stretch reads MPKWKESSHQ…RAYPKPHPGK (78 aa).

In terms of assembly, (Microbial infection) Interacts (via N-terminus) with human rhinovirus C capsid proteins VP1, VP2 and VP3. In terms of tissue distribution, expressed in bronchial epithelium from adults and in fetal lung tissue.

It localises to the cell membrane. In terms of biological role, cadherins are calcium-dependent cell adhesion proteins. They preferentially interact with themselves in a homophilic manner in connecting cells; cadherins may thus contribute to the sorting of heterogeneous cell types. Functionally, (Microbial infection) Acts as a receptor for human rhinovirus C. This Homo sapiens (Human) protein is Cadherin-related family member 3 (CDHR3).